The primary structure comprises 206 residues: Ras-related protein ralB-A (206 aa).

21–28 (GSGGVGKS) serves as a coordination point for GTP. The short motif at 43–51 (YEPTKADSY) is the Effector region element. Residues 68 to 72 (DTAGQ) and 128 to 131 (NKSD) contribute to the GTP site. A compositionally biased stretch (basic and acidic residues) spans 180–189 (KMSENKDKNG). A disordered region spans residues 180 to 206 (KMSENKDKNGKKSGKSKKGFKQRCCLL). A compositionally biased stretch (basic residues) spans 190-200 (KKSGKSKKGFK). Cysteine 203 is subject to Cysteine methyl ester. A lipid anchor (S-geranylgeranyl cysteine) is attached at cysteine 203. A propeptide spans 204–206 (CLL) (removed in mature form).

It belongs to the small GTPase superfamily. Ras family. Interacts with ralbp1 and rap1gds1. Weakly expressed in adult tissues and highest levels were found in heart, brain and testes.

It localises to the cell membrane. Its subcellular location is the midbody. It catalyses the reaction GTP + H2O = GDP + phosphate + H(+). Functionally, multifunctional GTPase involved in a variety of cellular processes including gene expression, cell migration, cell proliferation, oncogenic transformation and membrane trafficking. Accomplishes its multiple functions by interacting with distinct downstream effectors. Acts as a GTP sensor for GTP-dependent exocytosis of dense core vesicles. Required both to stabilize the assembly of the exocyst complex and to localize functional exocyst complexes to the leading edge of migrating cells. Required for suppression of apoptosis. In late stages of cytokinesis, upon completion of the bridge formation between dividing cells, mediates exocyst recruitment to the midbody to drive abscission. Regulates the actin cytoskeleton to play a role in gastrulation or neurulation. During the cleavage stages, the GTP-bound form induces a cortical reaction that affects the localization of pigment granules. Activated by the FGF pathway via ras and ral-GDS, but independently of raf. Directs ralbp1 to the plasma membrane. Involved in ligand-dependent receptor mediated endocytosis of the EGF and insulin receptors. In Xenopus laevis (African clawed frog), this protein is Ras-related protein ralB-A (ralb-a).